Consider the following 416-residue polypeptide: Putative competence-damage inducible protein (416 aa).

This sequence belongs to the CinA family.

The polypeptide is Putative competence-damage inducible protein (Bacillus subtilis (strain 168)).